A 208-amino-acid polypeptide reads, in one-letter code: MIFPCLFQSMLNLYAEALSTFSLLFEEAKSSSEIEPDAMMLATASLEGHPSVRTVLLKKFDARGFVFYSHLDSPKGRDLQANPQAALLFLWRSLREAGVQVRIEGRVQQVLAEEADAYFASRPRQSQIGAWASMQSCPLGSPEEFQARLAEVKAMFEGRDVPRPEEWVGFRVVPQVFEFWYGASFRLHERWRYQADAAGYWRKSLLYP.

Residues 53-58 (RTVLLK), 68-69 (YS), lysine 75, and glutamine 100 contribute to the FMN site. Substrate is bound at residue lysine 58. Substrate is bound by residues tyrosine 118, arginine 122, and serine 126. FMN is bound by residues 135–136 (QS) and tryptophan 180. 186–188 (RLH) contributes to the substrate binding site. Residue arginine 190 coordinates FMN.

Belongs to the pyridoxamine 5'-phosphate oxidase family. In terms of assembly, homodimer. Requires FMN as cofactor.

The enzyme catalyses pyridoxamine 5'-phosphate + O2 + H2O = pyridoxal 5'-phosphate + H2O2 + NH4(+). It carries out the reaction pyridoxine 5'-phosphate + O2 = pyridoxal 5'-phosphate + H2O2. It participates in cofactor metabolism; pyridoxal 5'-phosphate salvage; pyridoxal 5'-phosphate from pyridoxamine 5'-phosphate: step 1/1. Its pathway is cofactor metabolism; pyridoxal 5'-phosphate salvage; pyridoxal 5'-phosphate from pyridoxine 5'-phosphate: step 1/1. Functionally, catalyzes the oxidation of either pyridoxine 5'-phosphate (PNP) or pyridoxamine 5'-phosphate (PMP) into pyridoxal 5'-phosphate (PLP). In Xylella fastidiosa (strain Temecula1 / ATCC 700964), this protein is Pyridoxine/pyridoxamine 5'-phosphate oxidase.